The sequence spans 131 residues: uncharacterized protein (131 aa).

This is an uncharacterized protein from Caenorhabditis elegans.